A 155-amino-acid chain; its full sequence is DNA gyrase inhibitor (155 aa).

This sequence belongs to the DNA gyrase inhibitor family. Interacts with DNA gyrase.

The protein localises to the cytoplasm. In terms of biological role, inhibits the supercoiling activity of DNA gyrase. Acts by inhibiting DNA gyrase at an early step, prior to (or at the step of) binding of DNA by the gyrase. It protects cells against toxins that target DNA gyrase, by inhibiting activity of these toxins and reducing the formation of lethal double-strand breaks in the cell. The sequence is that of DNA gyrase inhibitor from Escherichia fergusonii (strain ATCC 35469 / DSM 13698 / CCUG 18766 / IAM 14443 / JCM 21226 / LMG 7866 / NBRC 102419 / NCTC 12128 / CDC 0568-73).